The sequence spans 404 residues: Histidine--tRNA ligase (404 aa).

It belongs to the class-II aminoacyl-tRNA synthetase family.

It localises to the cytoplasm. The enzyme catalyses tRNA(His) + L-histidine + ATP = L-histidyl-tRNA(His) + AMP + diphosphate + H(+). This Nanoarchaeum equitans (strain Kin4-M) protein is Histidine--tRNA ligase.